Consider the following 423-residue polypeptide: MLKEEDKIFTNLHGGQIHDLKSSKKRGDWDNTKALLDKGRDFIIEEIKKSGLRGRGGAGFSTGMKWSFMPKNSEKPCYLVVNADESEPGTCKDRDILRFEPHKLIEGCLLASFAIGANNCYIYIRGEFYNEASNIQRALDEAYKDRLIGKNACGSGFDCNIYLHRGAGAYICGEETALLESLEGKKGMPRLKPPFPAGFGLYGCPTTINNVESIAVVPTILRRRASWFASIGKPNNTGTKIFCISGHVNKPCNVEEAMGISLKELIEKYAGGVRGGWDNLKAIIPGGSSVPLLPKSLCEVDMDFDSLRTVGSGLGTGGIIVMDKSTDIIYAIARLSKFYMHESCGQCTPCREGTGWMWRVMIRLVKGNAKKSEIDELLNVTKEIEGHTICALGDAAAWPIQGLIRHFRSEIEDRIKSYSVAIS.

Residue 54 to 63 (GRGGAGFSTG) coordinates NAD(+). Position 166–213 (166–213 (GAGAYICGEETALLESLEGKKGMPRLKPPFPAGFGLYGCPTTINNVES)) interacts with FMN. 4 residues coordinate [4Fe-4S] cluster: C344, C347, C350, and C390.

This sequence belongs to the complex I 51 kDa subunit family. It depends on FMN as a cofactor. The cofactor is [4Fe-4S] cluster.

The catalysed reaction is a quinone + NADH + 5 H(+)(in) = a quinol + NAD(+) + 4 H(+)(out). In terms of biological role, NDH-1 shuttles electrons from NADH, via FMN and iron-sulfur (Fe-S) centers, to quinones in the respiratory chain. Couples the redox reaction to proton translocation (for every two electrons transferred, four hydrogen ions are translocated across the cytoplasmic membrane), and thus conserves the redox energy in a proton gradient. The protein is NADH-quinone oxidoreductase subunit F (nuoF) of Rickettsia akari (strain Hartford).